A 267-amino-acid chain; its full sequence is Hydroxyethylthiazole kinase (267 aa).

Position 46 (methionine 46) interacts with substrate. Residues arginine 122 and serine 168 each coordinate ATP. Position 195 (glycine 195) interacts with substrate.

It belongs to the Thz kinase family. It depends on Mg(2+) as a cofactor.

It carries out the reaction 5-(2-hydroxyethyl)-4-methylthiazole + ATP = 4-methyl-5-(2-phosphooxyethyl)-thiazole + ADP + H(+). It functions in the pathway cofactor biosynthesis; thiamine diphosphate biosynthesis; 4-methyl-5-(2-phosphoethyl)-thiazole from 5-(2-hydroxyethyl)-4-methylthiazole: step 1/1. Its function is as follows. Catalyzes the phosphorylation of the hydroxyl group of 4-methyl-5-beta-hydroxyethylthiazole (THZ). This is Hydroxyethylthiazole kinase from Nitratidesulfovibrio vulgaris (strain ATCC 29579 / DSM 644 / CCUG 34227 / NCIMB 8303 / VKM B-1760 / Hildenborough) (Desulfovibrio vulgaris).